A 52-amino-acid chain; its full sequence is Superoxide dismutase [Cu-Zn] 2 (52 aa).

Histidine 44 contacts Cu cation.

Belongs to the Cu-Zn superoxide dismutase family. In terms of assembly, homodimer. Cu cation serves as cofactor. Requires Zn(2+) as cofactor.

It is found in the cytoplasm. It carries out the reaction 2 superoxide + 2 H(+) = H2O2 + O2. Destroys radicals which are normally produced within the cells and which are toxic to biological systems. In Debaryomyces hansenii (Yeast), this protein is Superoxide dismutase [Cu-Zn] 2.